Reading from the N-terminus, the 514-residue chain is Bifunctional purine biosynthesis protein PurH (514 aa).

The region spanning 1 to 146 (MPPLALLSTS…KNFAHVTVLC (146 aa)) is the MGS-like domain.

Belongs to the PurH family.

It catalyses the reaction (6R)-10-formyltetrahydrofolate + 5-amino-1-(5-phospho-beta-D-ribosyl)imidazole-4-carboxamide = 5-formamido-1-(5-phospho-D-ribosyl)imidazole-4-carboxamide + (6S)-5,6,7,8-tetrahydrofolate. It carries out the reaction IMP + H2O = 5-formamido-1-(5-phospho-D-ribosyl)imidazole-4-carboxamide. It functions in the pathway purine metabolism; IMP biosynthesis via de novo pathway; 5-formamido-1-(5-phospho-D-ribosyl)imidazole-4-carboxamide from 5-amino-1-(5-phospho-D-ribosyl)imidazole-4-carboxamide (10-formyl THF route): step 1/1. Its pathway is purine metabolism; IMP biosynthesis via de novo pathway; IMP from 5-formamido-1-(5-phospho-D-ribosyl)imidazole-4-carboxamide: step 1/1. The protein is Bifunctional purine biosynthesis protein PurH of Cyanothece sp. (strain PCC 7425 / ATCC 29141).